A 262-amino-acid polypeptide reads, in one-letter code: Pyridoxine 5'-phosphate synthase (262 aa).

A 3-amino-2-oxopropyl phosphate-binding site is contributed by Asn-6. 8-9 (DH) contributes to the 1-deoxy-D-xylulose 5-phosphate binding site. Arg-17 is a binding site for 3-amino-2-oxopropyl phosphate. His-41 functions as the Proton acceptor in the catalytic mechanism. Positions 43 and 48 each coordinate 1-deoxy-D-xylulose 5-phosphate. The active-site Proton acceptor is Glu-68. Thr-98 is a binding site for 1-deoxy-D-xylulose 5-phosphate. His-210 serves as the catalytic Proton donor. Residues Gly-211 and 232-233 (GQ) each bind 3-amino-2-oxopropyl phosphate.

It belongs to the PNP synthase family. In terms of assembly, homooctamer; tetramer of dimers.

The protein localises to the cytoplasm. The enzyme catalyses 3-amino-2-oxopropyl phosphate + 1-deoxy-D-xylulose 5-phosphate = pyridoxine 5'-phosphate + phosphate + 2 H2O + H(+). It functions in the pathway cofactor biosynthesis; pyridoxine 5'-phosphate biosynthesis; pyridoxine 5'-phosphate from D-erythrose 4-phosphate: step 5/5. Catalyzes the complicated ring closure reaction between the two acyclic compounds 1-deoxy-D-xylulose-5-phosphate (DXP) and 3-amino-2-oxopropyl phosphate (1-amino-acetone-3-phosphate or AAP) to form pyridoxine 5'-phosphate (PNP) and inorganic phosphate. This is Pyridoxine 5'-phosphate synthase from Campylobacter jejuni subsp. jejuni serotype O:23/36 (strain 81-176).